The sequence spans 220 residues: Small ribosomal subunit protein eS8 (220 aa).

Disordered regions lie at residues 1–41 (MGIS…LSSN) and 131–151 (AKKD…KKSN). The segment covering 8–26 (MHKRRATGGKQKAWRKKRK) has biased composition (basic residues).

This sequence belongs to the eukaryotic ribosomal protein eS8 family.

This Oryza sativa subsp. japonica (Rice) protein is Small ribosomal subunit protein eS8 (RPS8).